A 113-amino-acid chain; its full sequence is Hydrogenase maturation factor HypA (113 aa).

Histidine 2 lines the Ni(2+) pocket. Cysteine 70, cysteine 73, cysteine 86, and cysteine 88 together coordinate Zn(2+).

This sequence belongs to the HypA/HybF family.

Its function is as follows. Involved in the maturation of [NiFe] hydrogenases. Required for nickel insertion into the metal center of the hydrogenase. This is Hydrogenase maturation factor HypA from Nostoc punctiforme (strain ATCC 29133 / PCC 73102).